A 38-amino-acid polypeptide reads, in one-letter code: Potassium channel toxin alpha-KTx 2.3 (38 aa).

3 disulfides stabilise this stretch: Cys7–Cys29, Cys13–Cys34, and Cys17–Cys36.

Belongs to the short scorpion toxin superfamily. Potassium channel inhibitor family. Alpha-KTx 02 subfamily. As to expression, expressed by the venom gland.

It is found in the secreted. Inhibitor of voltage-gated potassium channels (Kv). It is capable of displacing the binding of radio-labeled noxiustoxin (AC P08815) to rat brain synaptosomes with high affinity (about 100 pM). It is also capable of inhibiting transient potassium-currents (resembling I(A)-type currents), in cultured rat cerebellar granule cells. About 50% of the peak currents are reduced by application of a 1.5 uM solution of this toxin. The chain is Potassium channel toxin alpha-KTx 2.3 from Centruroides limpidus (Mexican scorpion).